The chain runs to 668 residues: Kelch repeat-containing protein ARB_01230 (668 aa).

Positions 1–32 (MEVGRFASKSASMTYLLLVLLVGFILPQQGQH) are cleaved as a signal peptide. Topologically, residues 33 to 522 (AHARTLARRD…GSGSDGPNIA (490 aa)) are extracellular. A glycan (N-linked (GlcNAc...) asparagine) is linked at Asn60. 2 Kelch repeats span residues 62–108 (TLYI…PRGD) and 125–176 (SLFL…ANIP). N-linked (GlcNAc...) asparagine glycosylation is found at Asn251 and Asn291. 4 Kelch repeats span residues 283-331 (ILGL…AVAA), 340-395 (QVYL…IWNS), 396-445 (QIVV…ASQT), and 463-509 (VQSV…GPHA). The chain crosses the membrane as a helical span at residues 523–543 (AIVAGVIAGCLGVLAIYLGFV). The Cytoplasmic portion of the chain corresponds to 544-668 (TWLYRRRLAI…PRQTLRVINQ (125 aa)). Residues 611–642 (DNQRHNHTRSSSGGNFDHLAQPERPSTSSSVE) are disordered.

Its subcellular location is the membrane. It is found in the secreted. This chain is Kelch repeat-containing protein ARB_01230, found in Arthroderma benhamiae (strain ATCC MYA-4681 / CBS 112371) (Trichophyton mentagrophytes).